The primary structure comprises 380 residues: Histidinol-phosphate aminotransferase (380 aa).

K235 is modified (N6-(pyridoxal phosphate)lysine).

Belongs to the class-II pyridoxal-phosphate-dependent aminotransferase family. Histidinol-phosphate aminotransferase subfamily. Homodimer. Pyridoxal 5'-phosphate is required as a cofactor.

The enzyme catalyses L-histidinol phosphate + 2-oxoglutarate = 3-(imidazol-4-yl)-2-oxopropyl phosphate + L-glutamate. The protein operates within amino-acid biosynthesis; L-histidine biosynthesis; L-histidine from 5-phospho-alpha-D-ribose 1-diphosphate: step 7/9. The chain is Histidinol-phosphate aminotransferase from Rhodococcus jostii (strain RHA1).